A 200-amino-acid chain; its full sequence is Small ribosomal subunit protein eS1 (200 aa).

This sequence belongs to the eukaryotic ribosomal protein eS1 family.

This is Small ribosomal subunit protein eS1 from Thermococcus onnurineus (strain NA1).